The following is a 176-amino-acid chain: RNA pyrophosphohydrolase (176 aa).

The Nudix hydrolase domain maps to glycine 6–lysine 149. The short motif at glycine 38–glycine 59 is the Nudix box element.

Belongs to the Nudix hydrolase family. RppH subfamily. It depends on a divalent metal cation as a cofactor.

Its function is as follows. Accelerates the degradation of transcripts by removing pyrophosphate from the 5'-end of triphosphorylated RNA, leading to a more labile monophosphorylated state that can stimulate subsequent ribonuclease cleavage. The protein is RNA pyrophosphohydrolase of Salmonella paratyphi C (strain RKS4594).